The primary structure comprises 209 residues: Imidazole glycerol phosphate synthase subunit HisH (209 aa).

In terms of domain architecture, Glutamine amidotransferase type-1 spans methionine 1–serine 205. Cysteine 79 (nucleophile) is an active-site residue. Residues histidine 180 and glutamate 182 contribute to the active site.

As to quaternary structure, heterodimer of HisH and HisF.

It localises to the cytoplasm. The catalysed reaction is 5-[(5-phospho-1-deoxy-D-ribulos-1-ylimino)methylamino]-1-(5-phospho-beta-D-ribosyl)imidazole-4-carboxamide + L-glutamine = D-erythro-1-(imidazol-4-yl)glycerol 3-phosphate + 5-amino-1-(5-phospho-beta-D-ribosyl)imidazole-4-carboxamide + L-glutamate + H(+). It catalyses the reaction L-glutamine + H2O = L-glutamate + NH4(+). It participates in amino-acid biosynthesis; L-histidine biosynthesis; L-histidine from 5-phospho-alpha-D-ribose 1-diphosphate: step 5/9. Its function is as follows. IGPS catalyzes the conversion of PRFAR and glutamine to IGP, AICAR and glutamate. The HisH subunit catalyzes the hydrolysis of glutamine to glutamate and ammonia as part of the synthesis of IGP and AICAR. The resulting ammonia molecule is channeled to the active site of HisF. This is Imidazole glycerol phosphate synthase subunit HisH from Bacillus cereus (strain ATCC 10987 / NRS 248).